The chain runs to 243 residues: 7-cyano-7-deazaguanine synthase (243 aa).

Residue Phe-18–Leu-28 coordinates ATP. Zn(2+) contacts are provided by Cys-206, Cys-221, Cys-224, and Cys-227.

It belongs to the QueC family. The cofactor is Zn(2+).

It catalyses the reaction 7-carboxy-7-deazaguanine + NH4(+) + ATP = 7-cyano-7-deazaguanine + ADP + phosphate + H2O + H(+). It participates in purine metabolism; 7-cyano-7-deazaguanine biosynthesis. Its function is as follows. Catalyzes the ATP-dependent conversion of 7-carboxy-7-deazaguanine (CDG) to 7-cyano-7-deazaguanine (preQ(0)). This Methylorubrum extorquens (strain CM4 / NCIMB 13688) (Methylobacterium extorquens) protein is 7-cyano-7-deazaguanine synthase.